A 294-amino-acid chain; its full sequence is uncharacterized protein (294 aa).

Residues 1 to 19 form the signal peptide; that stretch reads MFKRSLFILLLLAASLVKA.

This is an uncharacterized protein from Rickettsia felis (strain ATCC VR-1525 / URRWXCal2) (Rickettsia azadi).